We begin with the raw amino-acid sequence, 285 residues long: 2-hydroxy-6-oxononadienedioate/2-hydroxy-6-oxononatrienedioate hydrolase 1 (285 aa).

The active-site Proton acceptor is the His-265.

Belongs to the AB hydrolase superfamily. MhpC family. In terms of assembly, homodimer.

It carries out the reaction (2Z,4E)-2-hydroxy-6-oxonona-2,4-dienedioate + H2O = (2Z)-2-hydroxypenta-2,4-dienoate + succinate + H(+). The catalysed reaction is (2Z,4E,7E)-2-hydroxy-6-oxonona-2,4,7-trienedioate + H2O = (2Z)-2-hydroxypenta-2,4-dienoate + fumarate + H(+). It functions in the pathway aromatic compound metabolism; 3-phenylpropanoate degradation. Functionally, catalyzes the cleavage of the C5-C6 bond of 2-hydroxy-6-oxononadienedioate and 2-hydroxy-6-oxononatrienedioate, a dienol ring fission product of the bacterial meta-cleavage pathway for degradation of phenylpropionic acid. The sequence is that of 2-hydroxy-6-oxononadienedioate/2-hydroxy-6-oxononatrienedioate hydrolase 1 from Pseudomonas putida (Arthrobacter siderocapsulatus).